Consider the following 432-residue polypeptide: Glutamate-1-semialdehyde 2,1-aminomutase (432 aa).

Lysine 271 bears the N6-(pyridoxal phosphate)lysine mark.

Belongs to the class-III pyridoxal-phosphate-dependent aminotransferase family. HemL subfamily. Homodimer. Pyridoxal 5'-phosphate is required as a cofactor.

It localises to the cytoplasm. It carries out the reaction (S)-4-amino-5-oxopentanoate = 5-aminolevulinate. The protein operates within porphyrin-containing compound metabolism; protoporphyrin-IX biosynthesis; 5-aminolevulinate from L-glutamyl-tRNA(Glu): step 2/2. It participates in porphyrin-containing compound metabolism; chlorophyll biosynthesis. This chain is Glutamate-1-semialdehyde 2,1-aminomutase, found in Prochlorococcus marinus (strain MIT 9211).